The sequence spans 666 residues: Asperfuranone cluster transcription factor afoA (666 aa).

The zn(2)-C6 fungal-type DNA-binding region spans C16 to C43. Disordered stretches follow at residues L184–R206 and A347–A373. A compositionally biased stretch (low complexity) spans L353–S369.

It localises to the nucleus. Its function is as follows. Transcription factor that regulates the expression of the gene cluster that mediates the biosynthesis of asperfuranone, a probable antitumor agent. This is Asperfuranone cluster transcription factor afoA from Emericella nidulans (strain FGSC A4 / ATCC 38163 / CBS 112.46 / NRRL 194 / M139) (Aspergillus nidulans).